Consider the following 106-residue polypeptide: Large ribosomal subunit protein uL24 (106 aa).

Belongs to the universal ribosomal protein uL24 family. Part of the 50S ribosomal subunit.

One of two assembly initiator proteins, it binds directly to the 5'-end of the 23S rRNA, where it nucleates assembly of the 50S subunit. In terms of biological role, one of the proteins that surrounds the polypeptide exit tunnel on the outside of the subunit. In Delftia acidovorans (strain DSM 14801 / SPH-1), this protein is Large ribosomal subunit protein uL24.